We begin with the raw amino-acid sequence, 275 residues long: Small ribosomal subunit protein uS3 (275 aa).

In terms of domain architecture, KH type-2 spans 38-106; that stretch reads IRKLLATGLE…QVQLNILEVK (69 aa). The tract at residues 215–275 is disordered; it reads AAAAPASDRP…AEAPAESTES (61 aa). Residues 237–275 show a composition bias toward low complexity; the sequence is SGSAGTTATSTEAGRAATSDAPAAGTAAAAEAPAESTES.

The protein belongs to the universal ribosomal protein uS3 family. As to quaternary structure, part of the 30S ribosomal subunit. Forms a tight complex with proteins S10 and S14.

Its function is as follows. Binds the lower part of the 30S subunit head. Binds mRNA in the 70S ribosome, positioning it for translation. The protein is Small ribosomal subunit protein uS3 of Mycolicibacterium smegmatis (strain ATCC 700084 / mc(2)155) (Mycobacterium smegmatis).